A 334-amino-acid chain; its full sequence is MTAPMQDRYGRPLRDLRLSVIEACNFRCGYCMPADRVPDDYGFDSQQRLSFDQLETLVRAFVSVGVTKVRLTGGEPLLRRDLPSLIARLTAIEGIEDLALTTNGTLLARQAVALRQAGLRRITVSMDALEPALFRRMSGDRGEIAQVLTGIAAAEQAGFQRLKINCVVQRGVNEDQVLPLVEHFRGTGHVLRFIEFMDVGSCNGWTPDAVVTSAQLHERIHARWPLVALDANYTGEVAQRHAFADGAGEVGFVSSVSVPFCGDCQRARVSADGHLYTCLFASQGHDLKPALANGEPALATHLRQRWSVRGDRYSEVRASVPRRGKPVEMFLIGG.

The Radical SAM core domain maps to 8 to 244 (RYGRPLRDLR…GEVAQRHAFA (237 aa)). GTP is bound at residue Arg17. [4Fe-4S] cluster is bound by residues Cys24 and Cys28. Tyr30 provides a ligand contact to S-adenosyl-L-methionine. Cys31 contributes to the [4Fe-4S] cluster binding site. GTP is bound at residue Arg70. Gly74 contributes to the S-adenosyl-L-methionine binding site. Thr101 provides a ligand contact to GTP. Position 125 (Ser125) interacts with S-adenosyl-L-methionine. Lys163 is a binding site for GTP. Position 197 (Met197) interacts with S-adenosyl-L-methionine. Residues Cys261 and Cys264 each coordinate [4Fe-4S] cluster. 266 to 268 (RAR) contacts GTP. Residue Cys278 participates in [4Fe-4S] cluster binding.

The protein belongs to the radical SAM superfamily. MoaA family. As to quaternary structure, monomer and homodimer. It depends on [4Fe-4S] cluster as a cofactor.

It catalyses the reaction GTP + AH2 + S-adenosyl-L-methionine = (8S)-3',8-cyclo-7,8-dihydroguanosine 5'-triphosphate + 5'-deoxyadenosine + L-methionine + A + H(+). It participates in cofactor biosynthesis; molybdopterin biosynthesis. In terms of biological role, catalyzes the cyclization of GTP to (8S)-3',8-cyclo-7,8-dihydroguanosine 5'-triphosphate. This is GTP 3',8-cyclase from Xanthomonas axonopodis pv. citri (strain 306).